An 805-amino-acid chain; its full sequence is MSLLHIAVLLPLIFALIIPFVYRFYKRIHLGWFVLPIPVVLFIYFLSYISTTMSGNTIMEKANWMPHFGMNFNLYVDGLGLLFSLLITGIGCLIVLYSISYLSRQEQLGHFYCYLLLFMGAMLGLVLSDNLIILYLFWELTSFSSFLLISFWRDKQASIYGAQKSMLVTVFGGLSLLGGIILLSIAGGTTSIQELINNASEIQTSPFFIFSMILVLIGAMTKSAQFPFYVWLPDAMEAPTPVSAYLHSATMVKAGLYLVARMTPIFAVSQGWIWTVTAVGLITLFWASLNATKQQDLKGILAFSTVSQLGMIMAMLGVGAVSFHFEGAESQIYIAAFTAAIFHLINHATFKGALFMITGAVDHSTGTRDVKKLGGLLTIMPISFTITLITSLSMAGIPPFNGFLSKEKFLESMIEVTNVNLFSLDTLGILIPITAIIGSVFTFVYSIRFIGQIFLGSYKEDKLPKKAHEVSPLMLISPSILAILVIVFGLFPAILSGSIIEPAVNAIGQTTNSTAEFHMFHGFTPAFFSTLGIYIVGIVLIITFSYWIYLLQKQPTKLTINYWYNKFGDVTPRYSSKFTDTYVTGFTRNNLVIIFASLIVIALVTLLVTPFNIDFKDVSAIRPFELIIVVLIITAASMIIFAKSRLFSIIMASAVGYSVAIFFIFFGAPDLALTQFVVESISTALFLLCFYHLPNLNRHKETRSFKLVNIVISVGAGIVVTVLGLIAYGNRHFGSIAEFYKTHVYDLAHGTNMVNVILVDFRGTDTLFESSVLGIAGLGVYTMIKLRAKNDKSDEGGKNVEQTEE.

Transmembrane regions (helical) follow at residues 1-21 (MSLL…IPFV), 30-50 (LGWF…SYIS), 79-99 (LGLL…LYSI), 117-137 (LFMG…LYLF), 166-186 (MLVT…LSIA), 201-221 (EIQT…GAMT), 226-246 (FPFY…SAYL), 265-285 (IFAV…ITLF), 300-320 (ILAF…GVGA), 337-357 (FTAA…LFMI), 377-397 (LTIM…MAGI), 427-447 (LGIL…VYSI), 480-500 (ILAI…GSII), 531-551 (LGIY…IYLL), 591-611 (LVII…VTPF), 623-643 (PFEL…IFAK), 646-666 (LFSI…FIFF), 671-691 (LALT…LCFY), 707-727 (LVNI…GLIA), and 766-786 (TLFE…MIKL).

It belongs to the CPA3 antiporters (TC 2.A.63) subunit A family. May form a heterooligomeric complex that consists of seven subunits: mnhA1, mnhB1, mnhC1, mnhD1, mnhE1, mnhF1 and mnhG1.

It is found in the cell membrane. Mnh complex is a Na(+)/H(+) antiporter involved in Na(+) excretion. The sequence is that of Na(+)/H(+) antiporter subunit A1 (mnhA1) from Staphylococcus saprophyticus subsp. saprophyticus (strain ATCC 15305 / DSM 20229 / NCIMB 8711 / NCTC 7292 / S-41).